The primary structure comprises 82 residues: uncharacterized protein (82 aa).

Positions 11–82 constitute a Resolvase/invertase-type recombinase catalytic domain; the sequence is NVGIYVRVST…HIEQGIMTHC (72 aa). The active-site O-(5'-phospho-DNA)-serine intermediate is serine 19.

This sequence belongs to the site-specific recombinase resolvase family.

This is an uncharacterized protein from Bacillus phage phi105 (Bacteriophage phi-105).